The sequence spans 169 residues: NADH dehydrogenase [ubiquinone] 1 alpha subcomplex assembly factor 2 (169 aa).

Residues threonine 116–glutamine 169 are disordered. Position 134 is a phosphoserine (serine 134). Residues alanine 146–proline 156 are compositionally biased toward polar residues.

The protein belongs to the complex I NDUFA12 subunit family. Interacts with ARMC9. In terms of tissue distribution, highly expressed in ESCC cells. Also expressed in heart, skeletal muscle, liver, and in fibroblasts.

The protein resides in the mitochondrion. Its function is as follows. Acts as a molecular chaperone for mitochondrial complex I assembly. Complex I functions in the transfer of electrons from NADH to the respiratory chain. The immediate electron acceptor for the enzyme is believed to be ubiquinone. Is involved in the initial steps of cilia formation, including removal of CP110 from the mother centrioles, docking of membrane vesicles to the mother centrioles, and establishment of the transition zone. The polypeptide is NADH dehydrogenase [ubiquinone] 1 alpha subcomplex assembly factor 2 (NDUFAF2) (Homo sapiens (Human)).